A 274-amino-acid polypeptide reads, in one-letter code: Nitrogenase iron protein (274 aa).

8-15 (GKGGIGKS) serves as a coordination point for ATP. Cysteine 94 contributes to the [4Fe-4S] cluster binding site. Residue arginine 97 is modified to ADP-ribosylarginine; by dinitrogenase reductase ADP-ribosyltransferase. Cysteine 131 provides a ligand contact to [4Fe-4S] cluster.

It belongs to the NifH/BchL/ChlL family. As to quaternary structure, homodimer. [4Fe-4S] cluster serves as cofactor. In terms of processing, the reversible ADP-ribosylation of Arg-97 inactivates the nitrogenase reductase and regulates nitrogenase activity.

It carries out the reaction N2 + 8 reduced [2Fe-2S]-[ferredoxin] + 16 ATP + 16 H2O = H2 + 8 oxidized [2Fe-2S]-[ferredoxin] + 2 NH4(+) + 16 ADP + 16 phosphate + 6 H(+). The key enzymatic reactions in nitrogen fixation are catalyzed by the nitrogenase complex, which has 2 components: the iron protein and the molybdenum-iron protein. This Chlorobium phaeobacteroides (strain DSM 266 / SMG 266 / 2430) protein is Nitrogenase iron protein.